The sequence spans 223 residues: GTP-binding nuclear protein Ran (223 aa).

One can recognise a Small GTPase Ran-type domain in the interval 8 to 172 (VVAEFKLVLV…LWILRKLTGD (165 aa)). Position 19-26 (19-26 (DGGVGKTT)) interacts with GTP. A switch-I region spans residues 38 to 46 (KRYIATQGV). GTP-binding positions include Gly69, 123–126 (NKVD), and 151–153 (SAK). Residues 69–85 (GQEKLGGLREGYYIGAD) form a switch-II region.

The protein belongs to the small GTPase superfamily. Ran family. As to quaternary structure, monomer. Found in a nuclear export complex with RanGTP, exportin and pre-miRNA.

It is found in the nucleus. GTP-binding protein involved in nucleocytoplasmic transport. Required for the import of protein into the nucleus and also for RNA export. Involved in chromatin condensation and control of cell cycle. The chain is GTP-binding nuclear protein Ran from Tetrahymena pyriformis.